The following is a 296-amino-acid chain: Nucleotide-binding protein ABC3036 (296 aa).

13–20 (GMSGAGKS) contributes to the ATP binding site. 64–67 (DLRG) provides a ligand contact to GTP.

It belongs to the RapZ-like family.

Functionally, displays ATPase and GTPase activities. The protein is Nucleotide-binding protein ABC3036 of Shouchella clausii (strain KSM-K16) (Alkalihalobacillus clausii).